Consider the following 1307-residue polypeptide: Rab3 GTPase-activating protein regulatory subunit (1307 aa).

This sequence belongs to the Rab3-GAP regulatory subunit family. The Rab3 GTPase-activating complex is a heterodimer composed of rbg-1 and rbg-2.

The protein resides in the cytoplasm. In terms of biological role, probable regulatory subunit of a GTPase activating protein that has specificity for Rab3 subfamily. Rab3 proteins are involved in regulated exocytosis of neurotransmitters and hormones. Rab3 GTPase-activating complex specifically converts active Rab3-GTP to the inactive form Rab3-GDP. The polypeptide is Rab3 GTPase-activating protein regulatory subunit (rbg-2) (Caenorhabditis elegans).